The sequence spans 338 residues: MKRMIALDGAQGEGGGQILRSALSLSMITGLPFTITGIRAGRAKPGLLRQHLTAVKAAAEICRATVEGAELGSQRLLFRPGTVRGGDYRFAIGSAGSCTLVLQTVLPALWFADGPSRVEVSGGTDNPSAPPADFIRRVLEPLLAKMGIHQQTTLIRHGFYPAGGGVVATEVSPVALFNTLQLGERGNIVQMRGEVLLAGVPRHVAEREIATLVGSFSLHEQNIHNLPRDQGPGNTVSLEVESENITERFFVVGEKRVSAEVVAAQLVKEVKRYLASPAAVGEYLADQLVLPMALAGAGEFTVAHPSCHLLTNIAVVERFLPVRFGLVEADGVTRVSIE.

ATP is bound by residues glutamine 103 and 283–287; that span reads YLADQ. Histidine 308 serves as the catalytic Tele-AMP-histidine intermediate.

It belongs to the RNA 3'-terminal cyclase family. Type 1 subfamily.

It localises to the cytoplasm. The catalysed reaction is a 3'-end 3'-phospho-ribonucleotide-RNA + ATP = a 3'-end 2',3'-cyclophospho-ribonucleotide-RNA + AMP + diphosphate. Functionally, catalyzes the conversion of 3'-phosphate to a 2',3'-cyclic phosphodiester at the end of RNA. The mechanism of action of the enzyme occurs in 3 steps: (A) adenylation of the enzyme by ATP; (B) transfer of adenylate to an RNA-N3'P to produce RNA-N3'PP5'A; (C) and attack of the adjacent 2'-hydroxyl on the 3'-phosphorus in the diester linkage to produce the cyclic end product. The biological role of this enzyme is unknown but it is likely to function in some aspects of cellular RNA processing. This Escherichia coli (strain SMS-3-5 / SECEC) protein is RNA 3'-terminal phosphate cyclase.